A 200-amino-acid chain; its full sequence is Sec-independent protein translocase protein TatB (200 aa).

A helical transmembrane segment spans residues 2-22; the sequence is LPDIGGTELLIIAAVALIVVG. The tract at residues 160–200 is disordered; sequence KAPRKRASQKQEITVEAPKAVRAPRKRASKAGDSTASDIVS. The span at 191-200 shows a compositional bias: polar residues; the sequence is GDSTASDIVS.

Belongs to the TatB family. As to quaternary structure, the Tat system comprises two distinct complexes: a TatABC complex, containing multiple copies of TatA, TatB and TatC subunits, and a separate TatA complex, containing only TatA subunits. Substrates initially bind to the TatABC complex, which probably triggers association of the separate TatA complex to form the active translocon.

The protein localises to the cell inner membrane. Functionally, part of the twin-arginine translocation (Tat) system that transports large folded proteins containing a characteristic twin-arginine motif in their signal peptide across membranes. Together with TatC, TatB is part of a receptor directly interacting with Tat signal peptides. TatB may form an oligomeric binding site that transiently accommodates folded Tat precursor proteins before their translocation. The chain is Sec-independent protein translocase protein TatB from Caulobacter vibrioides (strain ATCC 19089 / CIP 103742 / CB 15) (Caulobacter crescentus).